The chain runs to 114 residues: MPKDSGPLVPLHWLGFGYAALVASGGIIGYAKAGSVPSLAAGLLFGGLAGLGSYQLSQDPKNIWLFLVTSGTLAGIMGMRFYNSRKFMPAGLIAGASLLMVVKLGISALSKPHQ.

4 helical membrane-spanning segments follow: residues 8–28, 33–53, 62–82, and 87–107; these read LVPLHWLGFGYAALVASGGII, AGSVPSLAAGLLFGGLAGLGS, NIWLFLVTSGTLAGIMGMRFY, and FMPAGLIAGASLLMVVKLGIS.

The protein localises to the mitochondrion membrane. Functionally, required for normal heme biosynthesis. The sequence is that of Transmembrane protein 14C (TMEM14C) from Bos taurus (Bovine).